The following is a 292-amino-acid chain: RNA 5'-monophosphate methyltransferase (292 aa).

Residues 1–22 (MAASTEQATGGVEKTAAEEKPR) form a disordered region. Residues arginine 46, asparagine 76, aspartate 110, 135 to 136 (DF), and methionine 164 contribute to the S-adenosyl-L-methionine site. A Bin3-type SAM domain is found at 53 to 274 (ELLRRLFPQS…KQATETHPIP (222 aa)).

It belongs to the methyltransferase superfamily. In terms of assembly, interacts with DICER1; the interaction may be mediated by RNA.

It is found in the cytoplasm. It carries out the reaction a 5'-end 5'-phospho-ribonucleoside-RNA + S-adenosyl-L-methionine = a 5'-end (5'-methylphospho)-ribonucleoside-RNA + S-adenosyl-L-homocysteine. It catalyses the reaction a 5'-end 5'-phospho-ribonucleoside-RNA + 2 S-adenosyl-L-methionine = a 5'-end (5'-bismethylphospho)-ribonucleoside-RNA + 2 S-adenosyl-L-homocysteine. O-methyltransferase that specifically monomethylates 5'-monophosphate of cytoplasmic histidyl tRNA (tRNA(His)), acting as a capping enzyme by protecting tRNA(His) from cleavage by DICER1. Also able, with less efficiently, to methylate the 5' monophosphate of a subset of pre-miRNAs, acting as a negative regulator of miRNA processing. The 5' monophosphate of pre-miRNAs is recognized by DICER1 and is required for pre-miRNAs processing: methylation at this position reduces the processing of pre-miRNAs by DICER1. Was also reported to mediate dimethylation of pre-miR-145; however dimethylation cannot be reproduced by another group which observes a monomethylation of pre-miR-145. The chain is RNA 5'-monophosphate methyltransferase (BCDIN3D) from Bos taurus (Bovine).